Consider the following 1076-residue polypeptide: Probable cellulose synthase A catalytic subunit 1 [UDP-forming] (1076 aa).

At 1-267 (MAANAGMVAG…SRIVPIPSNQ (267 aa)) the chain is on the cytoplasmic side. Zn(2+)-binding residues include C41, C44, C60, C63, C68, C71, C83, and C86. The RING-type; degenerate zinc finger occupies 41 to 87 (CQICGDTVGVSATGDVFVACNECAFPVCRPCYEYERKEGNQCCPQCK). The disordered stretch occupies residues 119-179 (HGNGKGPEWQ…HSIRSGTSSY (61 aa)). The chain crosses the membrane as a helical span at residues 268–288 (LNLYRIVIILRLIILMFFFQY). The Extracellular portion of the chain corresponds to 289-296 (RVTHPVRD). Residues 297–317 (AYGLWLVSVICEIWFALSWLL) traverse the membrane as a helical segment. At 318-851 (DQFPKWYPIN…LLERLAYINT (534 aa)) the chain is on the cytoplasmic side. UDP-alpha-D-glucose contacts are provided by S356, K362, E363, and D392. D392 is an active-site residue. A coiled-coil region spans residues 446 to 473 (VKERRAMKREYEEFKVRINALVAKAQKV). Residue K533 participates in UDP-alpha-D-glucose binding. 2 residues coordinate Mn(2+): K534 and D558. Residue D775 is part of the active site. Residues 852 to 872 (IVYPITSIPLIAYCVLPAICL) form a helical membrane-spanning segment. The Extracellular portion of the chain corresponds to 873–884 (LTNKFIIPEISN). The chain crosses the membrane as a helical span at residues 885-905 (YAGMFFILLFASIFATGILEL). Topologically, residues 906–920 (RWSGVGIEDWWRNEQ) are cytoplasmic. The chain crosses the membrane as a helical span at residues 921 to 941 (FWVIGGTSAHLFAVFQGLLKV). Over 942–971 (LAGIDTNFTVTSKASDEDGDFAELYVFKWT) the chain is Extracellular. An N-linked (GlcNAc...) asparagine glycan is attached at N948. A helical transmembrane segment spans residues 972–992 (SLLIPPTTVLVINLVGMVAGI). At 993-1003 (SYAINSGYQSW) the chain is on the cytoplasmic side. Residues 1004–1024 (GPLFGKLFFSIWVILHLYPFL) form a helical membrane-spanning segment. Residues 1025–1033 (KGLMGRQNR) lie on the Extracellular side of the membrane. Residues 1034-1054 (TPTIVIVWSILLASIFSLLWV) traverse the membrane as a helical segment. Over 1055–1076 (KIDPFISPTQKAVALGQCGVNC) the chain is Cytoplasmic.

This sequence belongs to the glycosyltransferase 2 family. Plant cellulose synthase subfamily. Zn(2+) is required as a cofactor. It depends on Mn(2+) as a cofactor.

The protein resides in the cell membrane. It catalyses the reaction [(1-&gt;4)-beta-D-glucosyl](n) + UDP-alpha-D-glucose = [(1-&gt;4)-beta-D-glucosyl](n+1) + UDP + H(+). It functions in the pathway glycan metabolism; plant cellulose biosynthesis. Its function is as follows. Catalytic subunit of cellulose synthase terminal complexes ('rosettes'), required for beta-1,4-glucan microfibril crystallization, a major mechanism of the cell wall formation. This chain is Probable cellulose synthase A catalytic subunit 1 [UDP-forming] (CESA1), found in Oryza sativa subsp. indica (Rice).